The chain runs to 259 residues: Adenosylcobinamide-GDP ribazoletransferase (259 aa).

Helical transmembrane passes span 9 to 29 (NLFF…WIEV), 43 to 63 (LVGL…LYWV), 64 to 84 (SPSV…GGFH), 118 to 138 (ALAL…LALF), 143 to 163 (VSLA…SFIF), and 196 to 216 (VLAL…GLVI).

This sequence belongs to the CobS family. Mg(2+) is required as a cofactor.

The protein resides in the cell inner membrane. The enzyme catalyses alpha-ribazole + adenosylcob(III)inamide-GDP = adenosylcob(III)alamin + GMP + H(+). It catalyses the reaction alpha-ribazole 5'-phosphate + adenosylcob(III)inamide-GDP = adenosylcob(III)alamin 5'-phosphate + GMP + H(+). It functions in the pathway cofactor biosynthesis; adenosylcobalamin biosynthesis; adenosylcobalamin from cob(II)yrinate a,c-diamide: step 7/7. Functionally, joins adenosylcobinamide-GDP and alpha-ribazole to generate adenosylcobalamin (Ado-cobalamin). Also synthesizes adenosylcobalamin 5'-phosphate from adenosylcobinamide-GDP and alpha-ribazole 5'-phosphate. In Shewanella halifaxensis (strain HAW-EB4), this protein is Adenosylcobinamide-GDP ribazoletransferase.